Consider the following 340-residue polypeptide: MPNLENLDWKNLGFSYIKTDFRFIATYKNGSWSQGELVSENALQLSEGSPVLHYGQACFEGLKAYRSQKGKALLFRPLENAKRLQTSCERLLMPKVSEELFLKACAEVIKANQKWLAPYKSGASLYLRPFVIGVGDNLGVKPASEYLFIVFCAPVGAYFKGGIEKGGARFITTAFDRAAPKGTGGVKVGGNYAASLLAHKIATEQGYDDCIYLDPTTHTKIEEVGAANFFGITHDDAFITPHSPSILPSVTRKSLMVLAKEHLKLKVEEREILIDELGAFKEAGACGTAAIITPIKEIAHNNKSYSFEAPGNITKQLYDLLLSIQQGEQEAPKDWIFEVG.

The residue at position 187 (Lys-187) is an N6-(pyridoxal phosphate)lysine.

This sequence belongs to the class-IV pyridoxal-phosphate-dependent aminotransferase family. Requires pyridoxal 5'-phosphate as cofactor.

The catalysed reaction is L-leucine + 2-oxoglutarate = 4-methyl-2-oxopentanoate + L-glutamate. The enzyme catalyses L-isoleucine + 2-oxoglutarate = (S)-3-methyl-2-oxopentanoate + L-glutamate. It catalyses the reaction L-valine + 2-oxoglutarate = 3-methyl-2-oxobutanoate + L-glutamate. Its pathway is amino-acid biosynthesis; L-isoleucine biosynthesis; L-isoleucine from 2-oxobutanoate: step 4/4. The protein operates within amino-acid biosynthesis; L-leucine biosynthesis; L-leucine from 3-methyl-2-oxobutanoate: step 4/4. It functions in the pathway amino-acid biosynthesis; L-valine biosynthesis; L-valine from pyruvate: step 4/4. In terms of biological role, acts on leucine, isoleucine and valine. The polypeptide is Branched-chain-amino-acid aminotransferase (ilvE) (Helicobacter pylori (strain J99 / ATCC 700824) (Campylobacter pylori J99)).